We begin with the raw amino-acid sequence, 102 residues long: NADH-quinone oxidoreductase subunit K 2 (102 aa).

Helical transmembrane passes span 6–26, 30–50, and 66–86; these read LEAF…GIIA, LVTV…ALVG, and FIIA…IAIF.

This sequence belongs to the complex I subunit 4L family. As to quaternary structure, NDH-1 is composed of 14 different subunits. Subunits NuoA, H, J, K, L, M, N constitute the membrane sector of the complex.

The protein resides in the cell inner membrane. The catalysed reaction is a quinone + NADH + 5 H(+)(in) = a quinol + NAD(+) + 4 H(+)(out). Its function is as follows. NDH-1 shuttles electrons from NADH, via FMN and iron-sulfur (Fe-S) centers, to quinones in the respiratory chain. The immediate electron acceptor for the enzyme in this species is believed to be ubiquinone. Couples the redox reaction to proton translocation (for every two electrons transferred, four hydrogen ions are translocated across the cytoplasmic membrane), and thus conserves the redox energy in a proton gradient. The polypeptide is NADH-quinone oxidoreductase subunit K 2 (Aquifex aeolicus (strain VF5)).